The following is a 444-amino-acid chain: Probable D-serine dehydratase (444 aa).

At K110 the chain carries N6-(pyridoxal phosphate)lysine.

The protein belongs to the serine/threonine dehydratase family. DsdA subfamily. The cofactor is pyridoxal 5'-phosphate.

It carries out the reaction D-serine = pyruvate + NH4(+). The protein is Probable D-serine dehydratase of Burkholderia thailandensis (strain ATCC 700388 / DSM 13276 / CCUG 48851 / CIP 106301 / E264).